We begin with the raw amino-acid sequence, 509 residues long: Cobyric acid synthase (509 aa).

A GATase cobBQ-type domain is found at 262-459; sequence ELKVGIIKLP…IHGIFENDDW (198 aa). The active-site Nucleophile is Cys343. His451 is an active-site residue.

This sequence belongs to the CobB/CobQ family. CobQ subfamily.

Its pathway is cofactor biosynthesis; adenosylcobalamin biosynthesis. In terms of biological role, catalyzes amidations at positions B, D, E, and G on adenosylcobyrinic A,C-diamide. NH(2) groups are provided by glutamine, and one molecule of ATP is hydrogenolyzed for each amidation. The sequence is that of Cobyric acid synthase from Prochlorococcus marinus subsp. pastoris (strain CCMP1986 / NIES-2087 / MED4).